We begin with the raw amino-acid sequence, 751 residues long: Catalase-peroxidase (751 aa).

Residues Met1–Asp21 are disordered. The segment at residues Trp90–Tyr244 is a cross-link (tryptophyl-tyrosyl-methioninium (Trp-Tyr) (with M-270)). The active-site Proton acceptor is His91. A disordered region spans residues Tyr195–Ala227. Basic and acidic residues predominate over residues Pro214–Ala227. Residues Tyr244–Met270 constitute a cross-link (tryptophyl-tyrosyl-methioninium (Tyr-Met) (with W-90)). Residue His285 participates in heme b binding. The tract at residues Gly364–Pro385 is disordered.

The protein belongs to the peroxidase family. Peroxidase/catalase subfamily. In terms of assembly, homodimer or homotetramer. Heme b serves as cofactor. Formation of the three residue Trp-Tyr-Met cross-link is important for the catalase, but not the peroxidase activity of the enzyme.

It carries out the reaction H2O2 + AH2 = A + 2 H2O. The enzyme catalyses 2 H2O2 = O2 + 2 H2O. Bifunctional enzyme with both catalase and broad-spectrum peroxidase activity. In Pseudomonas putida (strain ATCC 47054 / DSM 6125 / CFBP 8728 / NCIMB 11950 / KT2440), this protein is Catalase-peroxidase.